The following is a 552-amino-acid chain: Putative transport protein NT01EI_3867 (552 aa).

A run of 5 helical transmembrane segments spans residues 4–24 (IALT…IGNW), 26–46 (IYGV…VGHF), 65–85 (FGLI…FFSS), 90–112 (GLRL…AAIH), and 158–178 (MGYA…IWLI). RCK C-terminal domains lie at 191 to 276 (RDFD…VIGE) and 279 to 361 (DTSL…IVGN). The next 6 membrane-spanning stretches (helical) occupy residues 371–391 (MLPV…PLFI), 403–425 (AGGP…LYWF), 439–459 (IVLF…DTLL), 464–484 (VTWI…AALL), 493–513 (YLTL…LAFA), and 530–550 (VYPL…LLFW).

It belongs to the AAE transporter (TC 2.A.81) family. YidE subfamily.

The protein localises to the cell membrane. This chain is Putative transport protein NT01EI_3867, found in Edwardsiella ictaluri (strain 93-146).